The following is a 454-amino-acid chain: Glutamyl-tRNA reductase (454 aa).

Residues 49–52, serine 109, 114–116, and glutamine 120 contribute to the substrate site; these read TCNR and ETQ. Cysteine 50 serves as the catalytic Nucleophile. 189 to 194 is a binding site for NADP(+); the sequence is GAGKMS. Residues 434–454 are disordered; that stretch reads NDKNKQTSSSREQVLVSRFPD.

It belongs to the glutamyl-tRNA reductase family. Homodimer.

It catalyses the reaction (S)-4-amino-5-oxopentanoate + tRNA(Glu) + NADP(+) = L-glutamyl-tRNA(Glu) + NADPH + H(+). Its pathway is porphyrin-containing compound metabolism; protoporphyrin-IX biosynthesis; 5-aminolevulinate from L-glutamyl-tRNA(Glu): step 1/2. Functionally, catalyzes the NADPH-dependent reduction of glutamyl-tRNA(Glu) to glutamate 1-semialdehyde (GSA). This Brevibacillus brevis (strain 47 / JCM 6285 / NBRC 100599) protein is Glutamyl-tRNA reductase.